The following is a 122-amino-acid chain: Ribosome-binding factor A (122 aa).

It belongs to the RbfA family. As to quaternary structure, monomer. Binds 30S ribosomal subunits, but not 50S ribosomal subunits or 70S ribosomes.

Its subcellular location is the cytoplasm. One of several proteins that assist in the late maturation steps of the functional core of the 30S ribosomal subunit. Associates with free 30S ribosomal subunits (but not with 30S subunits that are part of 70S ribosomes or polysomes). Required for efficient processing of 16S rRNA. May interact with the 5'-terminal helix region of 16S rRNA. The chain is Ribosome-binding factor A from Cupriavidus necator (strain ATCC 17699 / DSM 428 / KCTC 22496 / NCIMB 10442 / H16 / Stanier 337) (Ralstonia eutropha).